The following is a 60-amino-acid chain: Rubredoxin 4 (60 aa).

Residues 4–55 (YKLYQCAQCGFEYDEAVGWPEDGIEPGTRWDDIPEDWSCPDCGAAKSDFFMV) enclose the Rubredoxin-like domain. Positions 9, 12, 42, and 45 each coordinate Fe cation.

This sequence belongs to the rubredoxin family. Fe(3+) serves as cofactor.

Functionally, involved in the hydrocarbon hydroxylating system, which transfers electrons from NADH to rubredoxin reductase and then through rubredoxin to alkane 1 monooxygenase. The chain is Rubredoxin 4 (rubA4) from Rhodococcus sp. (strain Q15).